A 240-amino-acid polypeptide reads, in one-letter code: Peptidyl-tRNA hydrolase (240 aa).

Tyr-14 contacts tRNA. Residue His-19 is the Proton acceptor of the active site. Residues Tyr-64, Asn-66, and Asn-112 each contribute to the tRNA site. Residues 190–204 are compositionally biased toward basic and acidic residues; that stretch reads KADEEKPRKDSEKKP. The disordered stretch occupies residues 190–240; it reads KADEEKPRKDSEKKPAGQSHIRQARNNNQPKLPATGPMADMLKKMFGNKGE. The span at 209–219 shows a compositional bias: polar residues; that stretch reads HIRQARNNNQP.

Belongs to the PTH family. As to quaternary structure, monomer.

It localises to the cytoplasm. The catalysed reaction is an N-acyl-L-alpha-aminoacyl-tRNA + H2O = an N-acyl-L-amino acid + a tRNA + H(+). In terms of biological role, hydrolyzes ribosome-free peptidyl-tRNAs (with 1 or more amino acids incorporated), which drop off the ribosome during protein synthesis, or as a result of ribosome stalling. Catalyzes the release of premature peptidyl moieties from peptidyl-tRNA molecules trapped in stalled 50S ribosomal subunits, and thus maintains levels of free tRNAs and 50S ribosomes. The chain is Peptidyl-tRNA hydrolase from Rhizobium etli (strain ATCC 51251 / DSM 11541 / JCM 21823 / NBRC 15573 / CFN 42).